The sequence spans 70 residues: Turripeptide Lol9.1 (70 aa).

The first 20 residues, 1 to 20, serve as a signal peptide directing secretion; the sequence is MKVYCLLLVLLVGLVSQAHG. The Kazal-like domain occupies 21–70; sequence KPTKRCLSVCSAEYEPVCGSDGKTYANKCHLMTEACWSPTSITLVHEGKC. 3 disulfide bridges follow: cysteine 26/cysteine 56, cysteine 30/cysteine 49, and cysteine 38/cysteine 70.

It belongs to the conopeptide P-like superfamily. In terms of tissue distribution, expressed by the venom duct.

The protein resides in the secreted. Functionally, acts as a neurotoxin by inhibiting an ion channel. May also act as a serine protease inhibitor, since it possess the kazal serine protease inhibitor signature. This chain is Turripeptide Lol9.1, found in Iotyrris olangoensis (Sea snail).